The following is a 393-amino-acid chain: Arginine biosynthesis bifunctional protein ArgJ 3 (393 aa).

Positions 148, 170, 181, 260, 388, and 393 each coordinate substrate. The active-site Nucleophile is the threonine 181.

This sequence belongs to the ArgJ family. As to quaternary structure, heterotetramer of two alpha and two beta chains.

It is found in the cytoplasm. The catalysed reaction is N(2)-acetyl-L-ornithine + L-glutamate = N-acetyl-L-glutamate + L-ornithine. It catalyses the reaction L-glutamate + acetyl-CoA = N-acetyl-L-glutamate + CoA + H(+). Its pathway is amino-acid biosynthesis; L-arginine biosynthesis; L-ornithine and N-acetyl-L-glutamate from L-glutamate and N(2)-acetyl-L-ornithine (cyclic): step 1/1. It participates in amino-acid biosynthesis; L-arginine biosynthesis; N(2)-acetyl-L-ornithine from L-glutamate: step 1/4. Catalyzes two activities which are involved in the cyclic version of arginine biosynthesis: the synthesis of N-acetylglutamate from glutamate and acetyl-CoA as the acetyl donor, and of ornithine by transacetylation between N(2)-acetylornithine and glutamate. The chain is Arginine biosynthesis bifunctional protein ArgJ 3 from Streptomyces clavuligerus.